A 264-amino-acid chain; its full sequence is Small ribosomal subunit protein uS2 (264 aa).

Residues 228 to 264 are disordered; it reads HEDVSAGPVEEQSDEAQAAEQGTEGDTAQLTSSQGRS. A compositionally biased stretch (polar residues) spans 251 to 264; sequence EGDTAQLTSSQGRS.

This sequence belongs to the universal ribosomal protein uS2 family.

This is Small ribosomal subunit protein uS2 from Deinococcus radiodurans (strain ATCC 13939 / DSM 20539 / JCM 16871 / CCUG 27074 / LMG 4051 / NBRC 15346 / NCIMB 9279 / VKM B-1422 / R1).